Reading from the N-terminus, the 304-residue chain is Recombination-associated protein RdgC (304 aa).

Belongs to the RdgC family.

The protein localises to the cytoplasm. It localises to the nucleoid. May be involved in recombination. The sequence is that of Recombination-associated protein RdgC from Shewanella putrefaciens (strain CN-32 / ATCC BAA-453).